Reading from the N-terminus, the 380-residue chain is Cytochrome b (380 aa).

4 helical membrane-spanning segments follow: residues 34-54, 78-99, 114-134, and 179-199; these read FGSL…LLAM, WLIR…YLHI, WNTG…GYVL, and FFAL…IHLT. Heme b-binding residues include His84 and His98. His183 and His197 together coordinate heme b. Residue His202 participates in a ubiquinone binding. 4 consecutive transmembrane segments (helical) span residues 227–247, 289–309, 321–341, and 348–368; these read LKDI…ALFS, LGGV…PFLH, LSQL…WVGS, and FIII…ILFP.

The protein belongs to the cytochrome b family. In terms of assembly, the cytochrome bc1 complex contains 11 subunits: 3 respiratory subunits (MT-CYB, CYC1 and UQCRFS1), 2 core proteins (UQCRC1 and UQCRC2) and 6 low-molecular weight proteins (UQCRH/QCR6, UQCRB/QCR7, UQCRQ/QCR8, UQCR10/QCR9, UQCR11/QCR10 and a cleavage product of UQCRFS1). This cytochrome bc1 complex then forms a dimer. Heme b is required as a cofactor.

It is found in the mitochondrion inner membrane. Component of the ubiquinol-cytochrome c reductase complex (complex III or cytochrome b-c1 complex) that is part of the mitochondrial respiratory chain. The b-c1 complex mediates electron transfer from ubiquinol to cytochrome c. Contributes to the generation of a proton gradient across the mitochondrial membrane that is then used for ATP synthesis. The sequence is that of Cytochrome b (MT-CYB) from Thalassoica antarctica (Antarctic petrel).